Reading from the N-terminus, the 406-residue chain is Probable G-protein coupled receptor tkr-1 (406 aa).

The Extracellular segment spans residues 1 to 47 (MNQEFLIQLGERACKNAENLTLPAELEGIFFCAPSSRESLATQVFVA). The helical transmembrane segment at 48–68 (IAFVLLMATAIIGNSVVMWII) threads the bilayer. The Cytoplasmic portion of the chain corresponds to 69–76 (YQHKVMHY). The chain crosses the membrane as a helical span at residues 77–97 (GFNYFLFNMAFADLLIALFNV). Residues 98–115 (GTSWTYNLYYDWWYGDLC) are Extracellular-facing. The chain crosses the membrane as a helical span at residues 116–136 (TLTSFFGIAPTTVSVCSMMAL). At 137–158 (SWDRCQAVVNPLQKRPLSRKRS) the chain is on the cytoplasmic side. The chain crosses the membrane as a helical span at residues 159–179 (VIAILIIWVVSTVTALPFAIA). Topologically, residues 180–204 (ASVNSLYTYDVVTSTVSKAHVCSAP) are extracellular. A helical membrane pass occupies residues 205-225 (VNTFFEKVLFGIQYALPIIIL). The Cytoplasmic portion of the chain corresponds to 226–261 (GSTFTRIAVAFRATNEATDSSLKNNHTRAKSKAVKM). Residues 262–282 (LFLMVVAFVVCWLPYHIYHAF) traverse the membrane as a helical segment. Residues 283-297 (ALEEFFDAARGKYAY) lie on the Extracellular side of the membrane. A helical transmembrane segment spans residues 298 to 318 (LLIYWIAMSSCAYNPIIYCFA). Residues 319 to 406 (NERFRIGFRY…KVHLLSCHER (88 aa)) lie on the Cytoplasmic side of the membrane.

This sequence belongs to the G-protein coupled receptor 1 family.

It localises to the cell membrane. Functionally, not known. Putative receptor. The polypeptide is Probable G-protein coupled receptor tkr-1 (tkr-1) (Caenorhabditis elegans).